A 134-amino-acid chain; its full sequence is Small ribosomal subunit protein uS8 (134 aa).

It belongs to the universal ribosomal protein uS8 family. Part of the 30S ribosomal subunit. Contacts proteins S5 and S12.

Its function is as follows. One of the primary rRNA binding proteins, it binds directly to 16S rRNA central domain where it helps coordinate assembly of the platform of the 30S subunit. The protein is Small ribosomal subunit protein uS8 of Nitratiruptor sp. (strain SB155-2).